Consider the following 161-residue polypeptide: Phosphohistidine phosphatase SixA (161 aa).

This sequence belongs to the SixA phosphatase family.

Functionally, exhibits phosphohistidine phosphatase activity towards the HPt domain of the ArcB sensor involved in the multistep His-Asp phosphorelay. The protein is Phosphohistidine phosphatase SixA (sixA) of Escherichia coli (strain K12).